The chain runs to 105 residues: Defensin-like protein (105 aa).

An N-terminal signal peptide occupies residues 1–25 (MARSLCFMAFAILAMMLFVAYEVQA). Intrachain disulfides connect Cys-28–Cys-72, Cys-39–Cys-59, Cys-45–Cys-66, and Cys-49–Cys-68.

This sequence belongs to the DEFL family. In terms of tissue distribution, flower. Found in petals, stamen and pistils, but not in sepals. In particular, accumulation in a configuration surrounding the inner reproductive whorls.

It localises to the secreted. Its subcellular location is the cell wall. It is found in the vacuole. In terms of biological role, involved in floral organogenesis. May play a protective role in flowers by protecting the reproductive organs from potential pathogen attack. This is Defensin-like protein (FST) from Nicotiana tabacum (Common tobacco).